A 542-amino-acid polypeptide reads, in one-letter code: CTP synthase (542 aa).

Residues 1–264 (MKFIFITGGV…AKLIINKLKL (264 aa)) are amidoligase domain. Ser12 contributes to the CTP binding site. Ser12 contributes to the UTP binding site. 13 to 18 (SLGKGI) provides a ligand contact to ATP. Tyr53 is an L-glutamine binding site. An ATP-binding site is contributed by Asp70. 2 residues coordinate Mg(2+): Asp70 and Glu138. CTP contacts are provided by residues 145–147 (DIE), 185–190 (KTKPTQ), and Lys221. UTP contacts are provided by residues 185–190 (KTKPTQ) and Lys221. 237-239 (KDA) is a binding site for ATP. The Glutamine amidotransferase type-1 domain maps to 298–541 (YIMLKDAYTS…VKSALDKKLK (244 aa)). Gly359 contacts L-glutamine. The active-site Nucleophile; for glutamine hydrolysis is the Cys386. Residues 387–390 (LGMQ), Glu410, and Arg467 each bind L-glutamine. Residues His514 and Glu516 contribute to the active site.

Belongs to the CTP synthase family. Homotetramer.

The catalysed reaction is UTP + L-glutamine + ATP + H2O = CTP + L-glutamate + ADP + phosphate + 2 H(+). It catalyses the reaction L-glutamine + H2O = L-glutamate + NH4(+). The enzyme catalyses UTP + NH4(+) + ATP = CTP + ADP + phosphate + 2 H(+). The protein operates within pyrimidine metabolism; CTP biosynthesis via de novo pathway; CTP from UDP: step 2/2. With respect to regulation, allosterically activated by GTP, when glutamine is the substrate; GTP has no effect on the reaction when ammonia is the substrate. The allosteric effector GTP functions by stabilizing the protein conformation that binds the tetrahedral intermediate(s) formed during glutamine hydrolysis. Inhibited by the product CTP, via allosteric rather than competitive inhibition. Its function is as follows. Catalyzes the ATP-dependent amination of UTP to CTP with either L-glutamine or ammonia as the source of nitrogen. Regulates intracellular CTP levels through interactions with the four ribonucleotide triphosphates. In Methanococcus aeolicus (strain ATCC BAA-1280 / DSM 17508 / OCM 812 / Nankai-3), this protein is CTP synthase.